The sequence spans 75 residues: Cytochrome c oxidase subunit 6C (75 aa).

Residues 1-13 (MAPEVLPKPRMRG) are Mitochondrial matrix-facing. Residues 14 to 54 (LLARRLRNHMAVAFVLSLGVAALYKFRVADQRKKAYADFYR) traverse the membrane as a helical segment. The Mitochondrial intermembrane portion of the chain corresponds to 55–75 (NYDVMKDFEEMRKAGIFQSVK).

The protein belongs to the cytochrome c oxidase subunit 6c family. Component of the cytochrome c oxidase (complex IV, CIV), a multisubunit enzyme composed of 14 subunits. The complex is composed of a catalytic core of 3 subunits MT-CO1, MT-CO2 and MT-CO3, encoded in the mitochondrial DNA, and 11 supernumerary subunits COX4I1 (or COX4I2), COX5A, COX5B, COX6A1 (or COX6A2), COX6B1 (or COX6B2), COX6C, COX7A2 (or COX7A1), COX7B, COX7C, COX8A and NDUFA4, which are encoded in the nuclear genome. The complex exists as a monomer or a dimer and forms supercomplexes (SCs) in the inner mitochondrial membrane with NADH-ubiquinone oxidoreductase (complex I, CI) and ubiquinol-cytochrome c oxidoreductase (cytochrome b-c1 complex, complex III, CIII), resulting in different assemblies (supercomplex SCI(1)III(2)IV(1) and megacomplex MCI(2)III(2)IV(2)).

The protein resides in the mitochondrion inner membrane. It participates in energy metabolism; oxidative phosphorylation. Its function is as follows. Component of the cytochrome c oxidase, the last enzyme in the mitochondrial electron transport chain which drives oxidative phosphorylation. The respiratory chain contains 3 multisubunit complexes succinate dehydrogenase (complex II, CII), ubiquinol-cytochrome c oxidoreductase (cytochrome b-c1 complex, complex III, CIII) and cytochrome c oxidase (complex IV, CIV), that cooperate to transfer electrons derived from NADH and succinate to molecular oxygen, creating an electrochemical gradient over the inner membrane that drives transmembrane transport and the ATP synthase. Cytochrome c oxidase is the component of the respiratory chain that catalyzes the reduction of oxygen to water. Electrons originating from reduced cytochrome c in the intermembrane space (IMS) are transferred via the dinuclear copper A center (CU(A)) of subunit 2 and heme A of subunit 1 to the active site in subunit 1, a binuclear center (BNC) formed by heme A3 and copper B (CU(B)). The BNC reduces molecular oxygen to 2 water molecules using 4 electrons from cytochrome c in the IMS and 4 protons from the mitochondrial matrix. In Homo sapiens (Human), this protein is Cytochrome c oxidase subunit 6C (COX6C).